Consider the following 492-residue polypeptide: N-succinylglutamate 5-semialdehyde dehydrogenase (492 aa).

Position 220 to 225 (220 to 225 (GSANTG)) interacts with NAD(+). Active-site residues include Glu-243 and Cys-277.

The protein belongs to the aldehyde dehydrogenase family. AstD subfamily.

It carries out the reaction N-succinyl-L-glutamate 5-semialdehyde + NAD(+) + H2O = N-succinyl-L-glutamate + NADH + 2 H(+). It functions in the pathway amino-acid degradation; L-arginine degradation via AST pathway; L-glutamate and succinate from L-arginine: step 4/5. Catalyzes the NAD-dependent reduction of succinylglutamate semialdehyde into succinylglutamate. The polypeptide is N-succinylglutamate 5-semialdehyde dehydrogenase (Escherichia coli O81 (strain ED1a)).